Reading from the N-terminus, the 755-residue chain is Probable ubiquitin carboxyl-terminal hydrolase creB (755 aa).

Residues 1–32 (MGSFLRSLRRDVGPPTPSVGATPAKKEPPVPP) form a disordered region. Positions 55 to 468 (FGMENYGNTC…CAYVLFYQET (414 aa)) constitute a USP domain. Cys64 acts as the Nucleophile in catalysis. Disordered stretches follow at residues 119–146 (EKQKAANAQRPGAPPNQPQKPEDKDSPE) and 237–270 (EASKQPEPERSLPPAESADSTELSGSSGSKTPNT). Over residues 237–246 (EASKQPEPER) the composition is skewed to basic and acidic residues. Residues 254–270 (ADSTELSGSSGSKTPNT) show a composition bias toward polar residues. His419 acts as the Proton acceptor in catalysis. A disordered region spans residues 495–755 (TLKQNGYPLS…LKKKSFSILS (261 aa)). Over residues 547 to 560 (ESSPADPSTTASAT) the composition is skewed to low complexity. Residues 577 to 648 (KKSDSHFKKE…RRHSPDDTKK (72 aa)) show a composition bias toward basic and acidic residues. Residues 581–630 (SHFKKERAKEEKERKANEKEKEKQRRRDQEARIREQRREDAEIRAALEAS) adopt a coiled-coil conformation. The span at 654 to 666 (SRLKRGSKSFSHR) shows a compositional bias: basic residues. The span at 693–709 (NGASESQQQLPNGQSPG) shows a compositional bias: polar residues. Positions 718 to 733 (TGLDEERDTLKDPKHD) are enriched in basic and acidic residues. Residues 734 to 755 (RSGHHGKWRSFSLKKKSFSILS) are compositionally biased toward basic residues.

The protein belongs to the peptidase C19 family. In terms of assembly, interacts with creA, creC and qutD.

It catalyses the reaction Thiol-dependent hydrolysis of ester, thioester, amide, peptide and isopeptide bonds formed by the C-terminal Gly of ubiquitin (a 76-residue protein attached to proteins as an intracellular targeting signal).. Its function is as follows. Ubiquitin thioesterase component of the regulatory network controlling carbon source utilization through ubiquitination and deubiquitination involving creA, creB, creC, creD and acrB. Deubiquitinates the creA catabolic repressor and the quinate permease qutD. Also plays a role in response to carbon starvation and the control of extracellular proteases activity. The protein is Probable ubiquitin carboxyl-terminal hydrolase creB (creB) of Aspergillus flavus (strain ATCC 200026 / FGSC A1120 / IAM 13836 / NRRL 3357 / JCM 12722 / SRRC 167).